Reading from the N-terminus, the 2126-residue chain is Phthioceranic/hydroxyphthioceranic acid synthase (2126 aa).

Positions valine 24–glutamine 447 constitute a Ketosynthase family 3 (KS3) domain. The Acyl-thioester intermediate; for beta-ketoacyl synthase activity role is filled by cysteine 196. Catalysis depends on for beta-ketoacyl synthase activity residues histidine 331 and histidine 367. The linker domain (LD) stretch occupies residues proline 449 to aspartate 549. Positions arginine 550–glutamate 849 are acyltransferase (AT). Serine 641 functions as the Acyl-ester intermediate; for acyltransferase activity in the catalytic mechanism. The dehydratase (DH) stretch occupies residues serine 909 to threonine 1191. The interval histidine 914–valine 1032 is N-terminal hotdog fold. Positions histidine 914 to lysine 1198 constitute a PKS/mFAS DH domain. The active-site Proton acceptor; for dehydratase activity is the histidine 947. Residues proline 1051 to lysine 1198 form a C-terminal hotdog fold region. The active-site Proton donor; for dehydratase activity is the aspartate 1115. Residues lysine 1227–aspartate 1398 are pseudo beta-ketoacyl reductase (PsiKR). An enoylreductase (ER) region spans residues serine 1426–isoleucine 1750. The beta-ketoacyl reductase (KR) stretch occupies residues glycine 1772–phenylalanine 2019. Residues leucine 1780–leucine 1783, serine 1803–glutamine 1806, aspartate 1831–isoleucine 1832, and phenylalanine 1904–serine 1905 contribute to the NADP(+) site. One can recognise a Carrier domain in the interval aspartate 2040 to glutamine 2126. Position 2075 is an O-(pantetheine 4'-phosphoryl)serine (serine 2075).

It depends on pantetheine 4'-phosphate as a cofactor.

It catalyses the reaction hexadecanoyl-[(hydroxy)phthioceranic acid synthase] + 7 (S)-methylmalonyl-CoA + 14 NADPH + 21 H(+) = C37-phthioceranyl-[(hydroxy)phthioceranic acid synthase] + 7 CO2 + 14 NADP(+) + 7 CoA + 7 H2O. The enzyme catalyses hexadecanoyl-[(hydroxy)phthioceranic acid synthase] + 8 (S)-methylmalonyl-CoA + 16 NADPH + 24 H(+) = C40-phthioceranyl-[(hydroxy)phthioceranic acid synthase] + 8 CO2 + 16 NADP(+) + 8 CoA + 8 H2O. It functions in the pathway lipid metabolism; fatty acid biosynthesis. Its pathway is glycolipid metabolism; sulfolipid-1 biosynthesis. Its function is as follows. Involved in sulfolipid-1 biosynthesis. Catalyzes the synthesis of the hepta- and octamethyl phthioceranic and hydroxyphthioceranic acids, the methyl-branched acyl constituents of sulfolipids. The polypeptide is Phthioceranic/hydroxyphthioceranic acid synthase (pks2) (Mycobacterium bovis (strain ATCC BAA-935 / AF2122/97)).